Here is a 70-residue protein sequence, read N- to C-terminus: DNA-directed RNA polymerase subunit omega (70 aa).

It belongs to the RNA polymerase subunit omega family. As to quaternary structure, the RNAP catalytic core consists of 2 alpha, 1 beta, 1 beta' and 1 omega subunit. When a sigma factor is associated with the core the holoenzyme is formed, which can initiate transcription.

It catalyses the reaction RNA(n) + a ribonucleoside 5'-triphosphate = RNA(n+1) + diphosphate. Its function is as follows. Promotes RNA polymerase assembly. Latches the N- and C-terminal regions of the beta' subunit thereby facilitating its interaction with the beta and alpha subunits. In Staphylococcus haemolyticus (strain JCSC1435), this protein is DNA-directed RNA polymerase subunit omega.